The sequence spans 121 residues: Small ribosomal subunit protein uS13 (121 aa).

The tract at residues 97-121 is disordered; it reads VRGQRTRTNARTRRGARKTVAGKKK. Residues 100-121 show a composition bias toward basic residues; it reads QRTRTNARTRRGARKTVAGKKK.

It belongs to the universal ribosomal protein uS13 family. As to quaternary structure, part of the 30S ribosomal subunit. Forms a loose heterodimer with protein S19. Forms two bridges to the 50S subunit in the 70S ribosome.

Located at the top of the head of the 30S subunit, it contacts several helices of the 16S rRNA. In the 70S ribosome it contacts the 23S rRNA (bridge B1a) and protein L5 of the 50S subunit (bridge B1b), connecting the 2 subunits; these bridges are implicated in subunit movement. Contacts the tRNAs in the A and P-sites. The polypeptide is Small ribosomal subunit protein uS13 (Synechococcus sp. (strain WH7803)).